The following is a 270-amino-acid chain: Formamidopyrimidine-DNA glycosylase (270 aa).

The active-site Schiff-base intermediate with DNA is the P2. The Proton donor role is filled by E3. K58 (proton donor; for beta-elimination activity) is an active-site residue. DNA-binding residues include H90, R109, and R152. An FPG-type zinc finger spans residues R237–K270. The Proton donor; for delta-elimination activity role is filled by R260.

Belongs to the FPG family. In terms of assembly, monomer. The cofactor is Zn(2+).

It carries out the reaction Hydrolysis of DNA containing ring-opened 7-methylguanine residues, releasing 2,6-diamino-4-hydroxy-5-(N-methyl)formamidopyrimidine.. The catalysed reaction is 2'-deoxyribonucleotide-(2'-deoxyribose 5'-phosphate)-2'-deoxyribonucleotide-DNA = a 3'-end 2'-deoxyribonucleotide-(2,3-dehydro-2,3-deoxyribose 5'-phosphate)-DNA + a 5'-end 5'-phospho-2'-deoxyribonucleoside-DNA + H(+). Functionally, involved in base excision repair of DNA damaged by oxidation or by mutagenic agents. Acts as a DNA glycosylase that recognizes and removes damaged bases. Has a preference for oxidized purines, such as 7,8-dihydro-8-oxoguanine (8-oxoG). Has AP (apurinic/apyrimidinic) lyase activity and introduces nicks in the DNA strand. Cleaves the DNA backbone by beta-delta elimination to generate a single-strand break at the site of the removed base with both 3'- and 5'-phosphates. The chain is Formamidopyrimidine-DNA glycosylase from Rhizorhabdus wittichii (strain DSM 6014 / CCUG 31198 / JCM 15750 / NBRC 105917 / EY 4224 / RW1) (Sphingomonas wittichii).